An 861-amino-acid polypeptide reads, in one-letter code: Nuclear cap-binding protein complex subunit 1 (861 aa).

The Nuclear localization signal signature appears at R22–P30. An MIF4G domain is found at C36 to K264.

This sequence belongs to the NCBP1 family. In terms of assembly, component of the nuclear cap-binding complex (CBC), a heterodimer composed of STO1/CBC1 and CBC2 that interacts with capped RNAs. The complex interacts strongly with the importin subunit alpha SRP1. The SRP1-CBC trimer also binds to capped RNAs, but formation of the importin alpha/beta heterodimer upon binding of KAP95 to SRP1 in the cytoplasm causes dissociation of CBC from the RNA. The CBC complex is part of the commitment complex 1 (CC1), binding to the cap of pre-mRNA and interacting with U1 snRNP subunits MUD2 and SNU56. The CBC complex is part of the NRD1 complex, composed of CBC2, NAB1, NRD1, SEN1 and STO1/CBC2. The CBC complex also interacts with NPL3 and eIF4G (TIF4631 and TIF4632).

It localises to the nucleus. It is found in the cytoplasm. Its subcellular location is the perinuclear region. Functionally, component of the CBC complex, which binds co-transcriptionally to the 5'-cap of pre-mRNAs and is involved in maturation, export and degradation of nuclear mRNAs. The CBC complex is required for efficient pre-mRNA splicing through efficient commitment complex and spliceosome formation. Together with NPL3, the CBC complex is required for export of mRNAs out of the nucleus. The CBC complex is also involved in nuclear mRNA degradation, probably by directing the mRNAs to the sites of degradation. Affects replication of the positive-strand RNA virus BMV. This Saccharomyces cerevisiae (strain ATCC 204508 / S288c) (Baker's yeast) protein is Nuclear cap-binding protein complex subunit 1 (STO1).